The chain runs to 456 residues: MSYPQGYLYQPPGSLALYSCPAYGASALAAPRSEELARSSSGSAFSPYPGSAAFTAQAATGFSSPLQYSSDPAGFPSYMGSPYDAHTTGMTGALSYHPYGSAAYPYQLNDPAYRKNATRDATATLKAWLQEHRKNPYPTKGEKIMLAIITKMTLTQVSTWFANARRRLKKENKMTWAPRNKSEDEDDDEGDGERVKEEQSEKAQDCNETSAEDEGISLHVDSLTDHSCSADSDGEKLPCRATDHLCESGSESKEKYDDDEDEEEGDEEDRVLPVKPATSSPLTGVEAPILNHQQDGSPRNSNKTSLDNGMSPSSQTPASKPKLWSLAEIATSDHKHSNLGSVLSSATSSAAHNPSYPSSSLLGRHIYYTSPFYSNYTNYGNFNALQSQGILRYSSAAVTANEGLNQTVLSTSSMHKHTSDSVRTASNQLDQHYRPTNFESKKDPSEVCTVGVQPYP.

Residues 110–172 (DPAYRKNATR…NARRRLKKEN (63 aa)) constitute a DNA-binding region (homeobox; TALE-type). Disordered stretches follow at residues 172–214 (NKMT…AEDE), 246–320 (CESG…PASK), and 434–456 (RPTN…QPYP). Composition is skewed to basic and acidic residues over residues 192 to 205 (GERV…KAQD) and 246 to 256 (CESGSESKEKY). Over residues 257–269 (DDDEDEEEGDEED) the composition is skewed to acidic residues. The segment covering 291–318 (NHQQDGSPRNSNKTSLDNGMSPSSQTPA) has biased composition (polar residues).

Belongs to the TALE/IRO homeobox family. In terms of tissue distribution, expressed in the neural plate in overlapping patterns with other irx members, which all share an anterior border of expression. Also expressed in the placodes. Broadly expressed in the tailbud rhombencephalon (hindbrain). Outside the nervous system and at tailbud stages, expressed in the developing otic vesicle, branchial arches, prospective heart region and pronephros.

The protein resides in the nucleus. In terms of biological role, acts partially redundantly with other irx members in neural patterning. Required for formation of the posterior forebrain, midbrain, hindbrain, and to a lesser extent, spinal cord. Acts early in neural plate development to induce expression of some but not all proneural genes, and specify a neural precursor state. Also up-regulates repressors that prevent neuronal differentiation. Patterns the neuroectoderm in both the anterior/posterior and dorsal/ventral axes. Probably dispensable for pronephric kidney development. This is Iroquois-class homeodomain protein irx-2 from Xenopus tropicalis (Western clawed frog).